Here is a 1389-residue protein sequence, read N- to C-terminus: DNA-directed RNA polymerase subunit beta'' (1389 aa).

Zn(2+)-binding residues include C224, C295, C302, and C305.

It belongs to the RNA polymerase beta' chain family. RpoC2 subfamily. In terms of assembly, in plastids the minimal PEP RNA polymerase catalytic core is composed of four subunits: alpha, beta, beta', and beta''. When a (nuclear-encoded) sigma factor is associated with the core the holoenzyme is formed, which can initiate transcription. Zn(2+) serves as cofactor.

Its subcellular location is the plastid. The protein resides in the chloroplast. The catalysed reaction is RNA(n) + a ribonucleoside 5'-triphosphate = RNA(n+1) + diphosphate. In terms of biological role, DNA-dependent RNA polymerase catalyzes the transcription of DNA into RNA using the four ribonucleoside triphosphates as substrates. The chain is DNA-directed RNA polymerase subunit beta'' from Morus indica (Mulberry).